We begin with the raw amino-acid sequence, 173 residues long: RNA polymerase sigma factor TcsR (173 aa).

Positions 122–169 (IKDLTQNEKNILRKIYLHGLRESEISRELNISRQAVNKTHLRALEKLK) are sigma-70 factor domain-4. Positions 143-162 (ESEISRELNISRQAVNKTHL) form a DNA-binding region, H-T-H motif.

This sequence belongs to the sigma-70 factor family.

Its function is as follows. Sigma factors are initiation factors that promote the attachment of RNA polymerase to specific initiation sites and are then released. Transcriptional regulator specifically required to activate expression of the toxin gene locus, composed of tcsL and tcdE/utxA. This Paraclostridium sordellii (Clostridium sordellii) protein is RNA polymerase sigma factor TcsR.